We begin with the raw amino-acid sequence, 503 residues long: AMP phosphorylase (503 aa).

Residues glycine 168, 194-199 (SRAITS), and threonine 203 contribute to the AMP site. Aspartate 256 (proton donor) is an active-site residue. AMP is bound by residues serine 264 and lysine 288.

This sequence belongs to the thymidine/pyrimidine-nucleoside phosphorylase family. Type 2 subfamily.

It carries out the reaction AMP + phosphate = alpha-D-ribose 1,5-bisphosphate + adenine. The enzyme catalyses CMP + phosphate = cytosine + alpha-D-ribose 1,5-bisphosphate. It catalyses the reaction UMP + phosphate = alpha-D-ribose 1,5-bisphosphate + uracil. In terms of biological role, catalyzes the conversion of AMP and phosphate to adenine and ribose 1,5-bisphosphate (R15P). Exhibits phosphorylase activity toward CMP and UMP in addition to AMP. Functions in an archaeal AMP degradation pathway, together with R15P isomerase and RubisCO. The sequence is that of AMP phosphorylase from Pyrococcus furiosus (strain ATCC 43587 / DSM 3638 / JCM 8422 / Vc1).